Consider the following 461-residue polypeptide: MEDLDALLSDLETTTSHMPRSGAPKERPAEPLTPPPSYGHQPQTGSGESSGASGDKDHLYSTVCKPRSPKPAAPAAPPFSSSSGVLGTGLCELDRLLQELNATQFNITDEIMSQFPSSKVASGEQKEDQSEDKKRPSLPSSPSPGLPKASATSATLELDRLMASLSDFRVQNHLPASGPTQPPVVSSTNEGSPSPPEPTGKGSLDTMLGLLQSDLSRRGVPTQAKGLCGSCNKPIAGQVVTALGRAWHPEHFVCGGCSTALGGSSFFEKDGAPFCPECYFERFSPRCGFCNQPIRHKMVTALGTHWHPEHFCCVSCGEPFGDEGFHEREGRPYCRRDFLQLFAPRCQGCQGPILDNYISALSALWHPDCFVCRECFAPFSGGSFFEHEGRPLCENHFHARRGSLCATCGLPVTGRCVSALGRRFHPDHFTCTFCLRPLTKGSFQERAGKPYCQPCFLKLFG.

The residue at position 1 (Met-1) is an N-acetylmethionine. Residues 1 to 87 (MEDLDALLSD…PFSSSSGVLG (87 aa)) form a disordered region. Positions 1 to 200 (MEDLDALLSD…GSPSPPEPTG (200 aa)) are transcription activation. The tract at residues 1-240 (MEDLDALLSD…CNKPIAGQVV (240 aa)) is interaction with PTK2B/PYK2. Residues 3 to 15 (DLDALLSDLETTT) carry the LD motif 1 motif. Thr-33 is subject to Phosphothreonine. Residue Tyr-38 is modified to Phosphotyrosine. Positions 40–52 (HQPQTGSGESSGA) are enriched in polar residues. A Phosphotyrosine; by FAK2 and FYN modification is found at Tyr-60. A Phosphoserine modification is found at Ser-68. The interval 83 to 136 (SGVLGTGLCELDRLLQELNATQFNITDEIMSQFPSSKVASGEQKEDQSEDKKRP) is interaction with PTK2/FAK1. The LD motif 2 signature appears at 92 to 104 (ELDRLLQELNATQ). The segment at 116–152 (PSSKVASGEQKEDQSEDKKRPSLPSSPSPGLPKASAT) is disordered. A compositionally biased stretch (basic and acidic residues) spans 124–135 (EQKEDQSEDKKR). 6 positions are modified to phosphoserine: Ser-137, Ser-140, Ser-141, Ser-143, Ser-164, and Ser-186. Positions 157 to 168 (ELDRLMASLSDF) match the LD motif 3 motif. The interval 172–205 (NHLPASGPTQPPVVSSTNEGSPSPPEPTGKGSLD) is disordered. Residues 183-192 (PVVSSTNEGS) show a composition bias toward polar residues. A Phosphothreonine modification is found at Thr-188. Phosphoserine occurs at positions 192 and 194. The short motif at 203–215 (SLDTMLGLLQSDL) is the LD motif 4 element. 4 LIM zinc-binding domains span residues 226 to 285 (GLCG…RFSP), 286 to 343 (RCGF…QLFA), 344 to 403 (PRCQ…RRGS), and 404 to 461 (LCAT…KLFG). Ser-403 is subject to Phosphoserine. Position 407 is a phosphothreonine (Thr-407).

The protein belongs to the paxillin family. As to quaternary structure, homooligomer. Interacts with PPARG. Interacts with TRAF4. Interacts with CRIP2. Interacts with HSPB1. Interacts with ILK. Interacts with LIMS1 and LIMS2. Interacts with NCK2. Interacts with NUDT16L1. Interacts with PAK. Interacts with PTPN12. Interacts with TCF3. Interacts with TCF7L2. Interacts with VCL. Interacts (via LD motif 3) with GIT1. Also interacts with GIT2. Forms a complex with ARHGEF7. Interacts with AR/androgen receptor in a ligand-dependent manner. Interacts with CSK. Interacts with PTK2/FAK1 and PTK2B/PYK2. Interacts with SLC6A3 and SLC6A4. Interacts with NR3C1. Interacts with SMAD3. Interacts with MAPK15. Interacts with SRC. Interacts with LYN. Interacts with talin. Interacts (via LIM zinc-binding domain 2) with CBLC (via RING-type zinc finger); the interaction is direct and enhances CBLC E3 ubiquitin-protein ligase activity. Interacts with PARVA. Interacts with PXN. In terms of processing, phosphorylated by gonadotropin-releasing hormone-activated SRC. Expressed in platelets, smooth muscle and prostate stromal cells (at protein level).

Its subcellular location is the cell junction. It is found in the focal adhesion. The protein resides in the nucleus matrix. It localises to the cytoplasm. The protein localises to the cytoskeleton. Its function is as follows. Functions as a molecular adapter coordinating multiple protein-protein interactions at the focal adhesion complex and in the nucleus. Links various intracellular signaling modules to plasma membrane receptors and regulates the Wnt and TGFB signaling pathways. May also regulate SLC6A3 and SLC6A4 targeting to the plasma membrane hence regulating their activity. In the nucleus, functions as a nuclear receptor coactivator regulating glucocorticoid, androgen, mineralocorticoid and progesterone receptor transcriptional activity. May play a role in the processes of cell growth, proliferation, migration, differentiation and senescence. May have a zinc-dependent DNA-binding activity. This chain is Transforming growth factor beta-1-induced transcript 1 protein (TGFB1I1), found in Homo sapiens (Human).